A 183-amino-acid chain; its full sequence is Capsid protein (183 aa).

Positions 136–183 (NAPILSTLPETTVVRRRGRSPRRRTPSPRRRRSQSPRRRRTQSRESQC) are disordered. The segment covering 149–176 (VRRRGRSPRRRTPSPRRRRSQSPRRRRT) has biased composition (basic residues). Serine 155, serine 162, and serine 170 each carry phosphoserine; by host. The stretch at 155–161 (SPRRRTP) is one 1; half-length repeat. The tract at residues 155-177 (SPRRRTPSPRRRRSQSPRRRRTQ) is 3 X 8 AA repeats of S-P-R-R-R-[PR]-[ST]-Q. The Bipartite nuclear localization signal motif lies at 158–175 (RRTPSPRRRRSQSPRRRR). Tandem repeats lie at residues 162–169 (SPRRRRSQ) and 170–177 (SPRRRRTQ). The segment at 177–183 (QSRESQC) is RNA binding.

It belongs to the orthohepadnavirus core antigen family. Homodimerizes, then multimerizes. Interacts with cytosol exposed regions of viral L glycoprotein present in the reticulum-to-Golgi compartment. Interacts with human FLNB. Phosphorylated form interacts with host importin alpha; this interaction depends on the exposure of the NLS, which itself depends upon genome maturation and/or phosphorylation of the capsid protein. Interacts with host NUP153. Post-translationally, phosphorylated by host SRPK1, SRPK2, and maybe protein kinase C or GAPDH. Phosphorylation is critical for pregenomic RNA packaging. Protein kinase C phosphorylation is stimulated by HBx protein and may play a role in transport of the viral genome to the nucleus at the late step during the viral replication cycle.

The protein resides in the virion. The protein localises to the host cytoplasm. In terms of biological role, self assembles to form an icosahedral capsid. Most capsids appear to be large particles with an icosahedral symmetry of T=4 and consist of 240 copies of capsid protein, though a fraction forms smaller T=3 particles consisting of 180 capsid proteins. Entering capsids are transported along microtubules to the nucleus. Phosphorylation of the capsid is thought to induce exposure of nuclear localization signal in the C-terminal portion of the capsid protein that allows binding to the nuclear pore complex via the importin (karyopherin-) alpha and beta. Capsids are imported in intact form through the nuclear pore into the nuclear basket, where it probably binds NUP153. Only capsids that contain the mature viral genome can release the viral DNA and capsid protein into the nucleoplasm. Immature capsids get stuck in the basket. Capsids encapsulate the pre-genomic RNA and the P protein. Pre-genomic RNA is reverse-transcribed into DNA while the capsid is still in the cytoplasm. The capsid can then either be directed to the nucleus, providing more genomes for transcription, or bud through the endoplasmic reticulum to provide new virions. The sequence is that of Capsid protein from Hepatitis B virus genotype D (isolate France/alpha1/1989) (HBV-D).